The chain runs to 287 residues: Endolytic peptidoglycan transglycosylase RlpA (287 aa).

An N-terminal signal peptide occupies residues 1–25; that stretch reads MKLKTGLNLTALLLFMISVAFPAQA. Residues 209–284 form the SPOR domain; the sequence is LKGTEFYCLK…ANNKPLIVYT (76 aa).

Belongs to the RlpA family.

Functionally, lytic transglycosylase with a strong preference for naked glycan strands that lack stem peptides. This chain is Endolytic peptidoglycan transglycosylase RlpA, found in Haemophilus influenzae (strain ATCC 51907 / DSM 11121 / KW20 / Rd).